The sequence spans 320 residues: MAQTIKRGGKGVRRATAARSAQRKVQTARQQTGSVLDSVLRWLPFSEETLHRILMTLILAAAAGLVWTVAVMAGIPALVSEQAAIIASDAGFKVSHLEVRGVNRMNEAKIYERILGQNDRAMTTLDLAALRDELNQLPWVKDARVSRKLPDTLVIDIVERTPHAVLRKPDRMVLIDDTGVELESVRADRAKGMLVLSGMGVGQRVEDLTRLLDAAPALKPQVSEAEWVGNRRWNLTFKTGQVLALPEGDETAASALLSFARMDGVNRLLGGKVAAFDMRAPDRIYMRVPGHADEVAAEKRAEEQARAEAKRAASAKSDEG.

Positions 1-24 (MAQTIKRGGKGVRRATAARSAQRK) are disordered. Topologically, residues 1-52 (MAQTIKRGGKGVRRATAARSAQRKVQTARQQTGSVLDSVLRWLPFSEETLHR) are cytoplasmic. The helical transmembrane segment at 53-73 (ILMTLILAAAAGLVWTVAVMA) threads the bilayer. The Periplasmic segment spans residues 74–320 (GIPALVSEQA…RAASAKSDEG (247 aa)). One can recognise a POTRA domain in the interval 92–160 (FKVSHLEVRG…DTLVIDIVER (69 aa)). Positions 296–320 (AAEKRAEEQARAEAKRAASAKSDEG) are disordered.

This sequence belongs to the FtsQ/DivIB family. FtsQ subfamily.

Its subcellular location is the cell inner membrane. Functionally, essential cell division protein. This chain is Cell division protein FtsQ, found in Novosphingobium aromaticivorans (strain ATCC 700278 / DSM 12444 / CCUG 56034 / CIP 105152 / NBRC 16084 / F199).